A 160-amino-acid chain; its full sequence is MKLQVLPLSQEAFSAYGDVIETQKRDFFHINNGLVERYHDLALVEILEQDRTLISINRAQPANLPLTIHELERHPLGTQAFIPMKGEVFVVVVALGDDKPDLSTLRAFITNGEQGVNYHRNVWHHPLFAWQRVTDFLTIDRGGSDNCDVESIPEQELCFA.

This sequence belongs to the ureidoglycolate lyase family. In terms of assembly, homodimer. Ni(2+) is required as a cofactor.

The catalysed reaction is (S)-ureidoglycolate = urea + glyoxylate. It participates in nitrogen metabolism; (S)-allantoin degradation. Functionally, catalyzes the catabolism of the allantoin degradation intermediate (S)-ureidoglycolate, generating urea and glyoxylate. Involved in the anaerobic utilization of allantoin as sole nitrogen source. Reinforces the induction of genes involved in the degradation of allantoin and glyoxylate by producing glyoxylate. The protein is Ureidoglycolate lyase of Escherichia coli O127:H6 (strain E2348/69 / EPEC).